The primary structure comprises 497 residues: UPF0371 protein DIP2346 (497 aa).

It belongs to the UPF0371 family.

The protein is UPF0371 protein DIP2346 of Corynebacterium diphtheriae (strain ATCC 700971 / NCTC 13129 / Biotype gravis).